We begin with the raw amino-acid sequence, 201 residues long: Pro-P-factor (201 aa).

A signal peptide spans 1–20 (MKITAVIALLFSLAAASPIP). 5 consecutive propeptides follow at residues 21 to 31 (VADPGVVSVSK), 58 to 65 (EFEAAPAK), 92 to 99 (EFEAAPEK), 126 to 133 (EFEAAPAK), and 160 to 201 (TEED…KFES). Residues asparagine 187 and asparagine 194 are each glycosylated (N-linked (GlcNAc...) asparagine).

Proteolytically cleaved by kpr, probably at the C-terminal side of dibasic Lys-Arg residues. Post-translationally, glycosylated. Most of the precursor molecules are glycosylated on at least one site, but only a small proportion are glycosylated on both sites.

Its subcellular location is the secreted. Its function is as follows. In h- cells under nutritional starvation, P-factor induces alteration of cell morphology toward mating, arrest of the cell cycle at the G1 phase prior to the initiation of DNA synthesis and indirect transcriptional activation of the sxa2 gene which down-regulates the signaling pathway. This is Pro-P-factor (map2) from Schizosaccharomyces pombe (strain 972 / ATCC 24843) (Fission yeast).